The chain runs to 169 residues: ATP synthase subunit b (169 aa).

Residues 11 to 31 traverse the membrane as a helical segment; that stretch reads IPSFIAQVVNFGLLLGLLYLF.

The protein belongs to the ATPase B chain family. In terms of assembly, F-type ATPases have 2 components, F(1) - the catalytic core - and F(0) - the membrane proton channel. F(1) has five subunits: alpha(3), beta(3), gamma(1), delta(1), epsilon(1). F(0) has three main subunits: a(1), b(2) and c(10-14). The alpha and beta chains form an alternating ring which encloses part of the gamma chain. F(1) is attached to F(0) by a central stalk formed by the gamma and epsilon chains, while a peripheral stalk is formed by the delta and b chains.

Its subcellular location is the cell membrane. F(1)F(0) ATP synthase produces ATP from ADP in the presence of a proton or sodium gradient. F-type ATPases consist of two structural domains, F(1) containing the extramembraneous catalytic core and F(0) containing the membrane proton channel, linked together by a central stalk and a peripheral stalk. During catalysis, ATP synthesis in the catalytic domain of F(1) is coupled via a rotary mechanism of the central stalk subunits to proton translocation. Functionally, component of the F(0) channel, it forms part of the peripheral stalk, linking F(1) to F(0). This chain is ATP synthase subunit b, found in Dehalococcoides mccartyi (strain ATCC BAA-2266 / KCTC 15142 / 195) (Dehalococcoides ethenogenes (strain 195)).